Consider the following 54-residue polypeptide: Large ribosomal subunit protein bL32c (54 aa).

It belongs to the bacterial ribosomal protein bL32 family.

It is found in the plastid. The protein resides in the chloroplast. This chain is Large ribosomal subunit protein bL32c, found in Helianthus annuus (Common sunflower).